The chain runs to 268 residues: MANSFLDSLTLVRQNTPLVQCLTNSVVMQFTANVLLAAGATPAMVDTPAESAEFAAVANGVLINAGTPSAEQYQGMTKAIEGARKAGTPWVLDPVAVGGLSERTKYAEGIVDKQPAAIRGNASEVVALAGLGAGGRGVDATDSVEAALEAAQLLAKRTGGVVAVSGAEDLIVSADRVTWLRSGDPMLQLVIGTGCSLGALTAAYLGATVDSDISAHDAVLAAHAHVGAAGQIAAQKASAPGSFAVAFIDALYDVDAQAVASLVDVREA.

M44 is a substrate binding site. The ATP site is built by R119 and S165. G192 serves as a coordination point for substrate.

The protein belongs to the Thz kinase family. Requires Mg(2+) as cofactor.

The enzyme catalyses 5-(2-hydroxyethyl)-4-methylthiazole + ATP = 4-methyl-5-(2-phosphooxyethyl)-thiazole + ADP + H(+). It participates in cofactor biosynthesis; thiamine diphosphate biosynthesis; 4-methyl-5-(2-phosphoethyl)-thiazole from 5-(2-hydroxyethyl)-4-methylthiazole: step 1/1. Catalyzes the phosphorylation of the hydroxyl group of 4-methyl-5-beta-hydroxyethylthiazole (THZ). This is Hydroxyethylthiazole kinase from Corynebacterium glutamicum (strain R).